The chain runs to 98 residues: Bombyxin A-3 homolog (98 aa).

The first 18 residues, Met1–Gly18, serve as a signal peptide directing secretion. Intrachain disulfides connect Cys26-Cys85, Cys38-Cys98, and Cys84-Cys89. Positions Thr47–Gly75 are cleaved as a propeptide — c peptide like.

The protein belongs to the insulin family. In terms of assembly, heterodimer of a B chain and an A chain linked by two disulfide bonds.

The protein resides in the secreted. In terms of biological role, brain peptide responsible for activation of prothoracic glands to produce ecdysone in insects. This chain is Bombyxin A-3 homolog (SBXA3), found in Samia cynthia (Ailanthus silkmoth).